The chain runs to 795 residues: Inactive N-acetylated-alpha-linked acidic dipeptidase-like protein 2 (795 aa).

The interval 1–38 (MGENEASLPNTSLQGKKMAYQKVHADQRAPGHSQYLDN) is disordered. At 1 to 121 (MGENEASLPN…RSAPKSNRCN (121 aa)) the chain is on the cytoplasmic side. The residue at position 92 (serine 92) is a Phosphoserine. The helical; Signal-anchor for type II membrane protein transmembrane segment at 122 to 142 (FCHVLKILCTATILFIFGILI) threads the bilayer. At 143-795 (GYYVHTNCPS…VFKSVLDGKN (653 aa)) the chain is on the extracellular side. N-linked (GlcNAc...) asparagine glycosylation is found at asparagine 295, asparagine 373, asparagine 534, and asparagine 759.

This sequence belongs to the peptidase M28 family. M28B subfamily. Expressed at higher level in kidney and placenta. In embryo, it is mainly confined to duodenal and stomach endoderm, mesonephros, metanephros and pancreas.

The protein localises to the membrane. In terms of biological role, may be catalytically inactive. This chain is Inactive N-acetylated-alpha-linked acidic dipeptidase-like protein 2 (NAALADL2), found in Homo sapiens (Human).